A 35-amino-acid chain; its full sequence is N-acylglucosamine 2-epimerase (35 aa).

A leucine-zipper region spans residues 1–21; the sequence is LNLVDQLGEADEELAGTYAEL.

It belongs to the N-acylglucosamine 2-epimerase family. In terms of assembly, homodimer. Forms a heterodimer with renin and inhibits its activity.

It catalyses the reaction an N-acyl-D-glucosamine = an N-acyl-D-mannosamine. It functions in the pathway amino-sugar metabolism; N-acetylneuraminate degradation. Catalyzes the interconversion of N-acetylglucosamine to N-acetylmannosamine. Involved in the N-glycolylneuraminic acid (Neu5Gc) degradation pathway. This chain is N-acylglucosamine 2-epimerase, found in Canis lupus familiaris (Dog).